A 496-amino-acid chain; its full sequence is Coiled-coil domain-containing protein 77 (496 aa).

The tract at residues 1-42 (MDFSPPHGLRGGRSPSLQDTTISSSHTQKNGGDSTPLPPINE) is disordered. A compositionally biased stretch (polar residues) spans 15 to 33 (PSLQDTTISSSHTQKNGGD). The stretch at 51 to 113 (RELLEYYRKK…KALSDMQVYL (63 aa)) forms a coiled coil. The segment at 170–208 (QRTVQSGDPFDRKVQRSGRAGVKQVPLKAPGKQDRTKAA) is disordered. Positions 214-495 (QILLLQVEAL…IYGLENELRI (282 aa)) form a coiled coil.

The chain is Coiled-coil domain-containing protein 77 (ccdc77) from Xenopus laevis (African clawed frog).